The primary structure comprises 359 residues: Phospho-N-acetylmuramoyl-pentapeptide-transferase (359 aa).

Helical transmembrane passes span 3–23, 55–75, 80–100, 117–137, 156–176, 187–207, 231–251, 255–275, 280–300, and 334–354; these read QILI…PVLI, VAIL…GLAF, IGAS…VGFI, TAKT…VLQF, IATV…IVSA, LDGL…LITF, LALI…WNAA, IFMG…LSVT, ILAV…VLQI, and FWLL…GEWL.

The protein belongs to the glycosyltransferase 4 family. MraY subfamily. Mg(2+) serves as cofactor.

The protein resides in the cell membrane. It carries out the reaction UDP-N-acetyl-alpha-D-muramoyl-L-alanyl-gamma-D-glutamyl-meso-2,6-diaminopimeloyl-D-alanyl-D-alanine + di-trans,octa-cis-undecaprenyl phosphate = di-trans,octa-cis-undecaprenyl diphospho-N-acetyl-alpha-D-muramoyl-L-alanyl-D-glutamyl-meso-2,6-diaminopimeloyl-D-alanyl-D-alanine + UMP. Its pathway is cell wall biogenesis; peptidoglycan biosynthesis. Its function is as follows. Catalyzes the initial step of the lipid cycle reactions in the biosynthesis of the cell wall peptidoglycan: transfers peptidoglycan precursor phospho-MurNAc-pentapeptide from UDP-MurNAc-pentapeptide onto the lipid carrier undecaprenyl phosphate, yielding undecaprenyl-pyrophosphoryl-MurNAc-pentapeptide, known as lipid I. The chain is Phospho-N-acetylmuramoyl-pentapeptide-transferase from Mycobacterium tuberculosis (strain ATCC 25177 / H37Ra).